We begin with the raw amino-acid sequence, 629 residues long: MFYPDPFDVIIIGGGHAGTEAAMAAARMGQQTLLLTHNIDTLGQMSCNPAIGGIGKGHLVKEVDALGGLMAKAIDQAGIQFRILNASKGPAVRATRAQADRVLYRQAVRTALENQPNLMIFQQAVEDLIVENDRVVGAVTQMGLKFRAKAVVLTVGTFLDGKIHIGLDNYSGGRAGDPPSIPLSRRLRELPLRVGRLKTGTPPRIDARTIDFSVLAQQHGDNPMPVFSFMGNASQHPQQVPCYITHTNEKTHDVIRSNLDRSPMYAGVIEGVGPRYCPSIEDKVMRFADRNQHQIFLEPEGLTSNEIYPNGISTSLPFDVQMQIVRSMQGMENAKIVRPGYAIEYDFFDPRDLKPTLESKFLQGLFFAGQINGTTGYEEAAAQGLLAGLNAARLSADKEGWAPARSQAYLGVLVDDLCTLGTKEPYRMFTSRAEYRLMLREDNADLRLTEIGRELGLVDDERWARFNEKLENIERERQRLKSTRVTPSAEAAAEVNAHLTAPLSREASGEDLLRRPEMTYEKLTTLTPFAPALTDEQAAEQVEIQVKYEGYIARQQDEIEKQLRNENTLLPATLDYRQVSGLSNEVIAKLNDHKPASIGQASRISGVTPAAISILLVWLKKQGMLRRSA.

FAD is bound by residues 13–18 (GGGHAG), valine 125, and serine 180. 273–287 (GPRYCPSIEDKVMRF) is a binding site for NAD(+). Residue glutamine 370 participates in FAD binding.

The protein belongs to the MnmG family. In terms of assembly, homodimer. Heterotetramer of two MnmE and two MnmG subunits. The cofactor is FAD.

The protein resides in the cytoplasm. NAD-binding protein involved in the addition of a carboxymethylaminomethyl (cmnm) group at the wobble position (U34) of certain tRNAs, forming tRNA-cmnm(5)s(2)U34. This chain is tRNA uridine 5-carboxymethylaminomethyl modification enzyme MnmG, found in Shigella dysenteriae serotype 1 (strain Sd197).